Reading from the N-terminus, the 453-residue chain is Exopolyphosphatase PRUNE1 (453 aa).

Position 1 is an N-acetylmethionine (Met-1). Mn(2+) contacts are provided by Asp-28, Asp-30, Asp-106, and Asp-179. The DHH motif signature appears at 106–108 (DHH). The interval 393–420 (SLLSGLSQDEEEPPLPPTPMNSLVDECP) is essential for homodimerization. Residues 396–419 (SGLSQDEEEPPLPPTPMNSLVDEC) form a disordered region. Ser-399 is subject to Phosphoserine. Position 410 is a phosphothreonine (Thr-410). Phosphoserine is present on Ser-414.

It belongs to the PPase class C family. Prune subfamily. Homooligomer. Able to homodimerize via its C-terminal domain. Interacts with NME1. Interacts with GSK3; at focal adhesion complexes where paxillin and vinculin are colocalized. Requires Mn(2+) as cofactor.

It localises to the cytoplasm. It is found in the nucleus. The protein localises to the cell junction. Its subcellular location is the focal adhesion. It catalyses the reaction diphosphate + H2O = 2 phosphate + H(+). With respect to regulation, activated by magnesium ions and inhibited by manganese ions. Inhibited by dipyridamole, moderately sensitive to IBMX and inhibited by vinpocetine. In terms of biological role, phosphodiesterase (PDE) that has higher activity toward cAMP than cGMP, as substrate. Plays a role in cell proliferation, is able to induce cell motility and acts as a negative regulator of NME1. The sequence is that of Exopolyphosphatase PRUNE1 (PRUNE1) from Bos taurus (Bovine).